The sequence spans 364 residues: Dihydroorotate dehydrogenase (quinone) (364 aa).

FMN contacts are provided by residues 62–66 (AGFDK) and Thr86. Substrate is bound at residue Lys66. 111-115 (NRMGF) is a substrate binding site. Asn142 and Asn175 together coordinate FMN. Asn175 serves as a coordination point for substrate. The active-site Nucleophile is the Ser178. Asn180 contacts substrate. The FMN site is built by Lys216 and Thr244. 245–246 (NT) is a substrate binding site. Residues Gly267, Gly296, and 317–318 (YT) each bind FMN.

The protein belongs to the dihydroorotate dehydrogenase family. Type 2 subfamily. In terms of assembly, monomer. The cofactor is FMN.

Its subcellular location is the cell membrane. The enzyme catalyses (S)-dihydroorotate + a quinone = orotate + a quinol. Its pathway is pyrimidine metabolism; UMP biosynthesis via de novo pathway; orotate from (S)-dihydroorotate (quinone route): step 1/1. In terms of biological role, catalyzes the conversion of dihydroorotate to orotate with quinone as electron acceptor. This Anaeromyxobacter sp. (strain K) protein is Dihydroorotate dehydrogenase (quinone).